Here is a 120-residue protein sequence, read N- to C-terminus: Protein CcdB (120 aa).

In terms of domain architecture, Response regulatory spans 3 to 118 (RVLVVDDAKF…KVLEAVSRVM (116 aa)). At aspartate 53 the chain carries 4-aspartylphosphate.

This Bacillus subtilis (strain 168) protein is Protein CcdB (ccdB).